We begin with the raw amino-acid sequence, 118 residues long: MRAKDALGRFGEDVAARHLAAVGAEILDRNWRCREGELDLVVQDGESLVFCEVKTRSGTRYGSAAEAVVGRKAARIRRLAARWLAEHPHASSLVRFDVLLVSRPSTGPVRVEHIRGAF.

Belongs to the UPF0102 family.

This is UPF0102 protein Francci3_3586 from Frankia casuarinae (strain DSM 45818 / CECT 9043 / HFP020203 / CcI3).